A 196-amino-acid polypeptide reads, in one-letter code: Histone H1.0-B (196 aa).

Disordered stretches follow at residues 1 to 29 (MAENSAATPAAKPKRSKALKKSTDHPKYS) and 86 to 196 (GVGA…GRKK). One can recognise an H15 domain in the interval 24–97 (DHPKYSDMIL…GASGSFRLAK (74 aa)). The span at 104-196 (PAKKPKKEIK…ASPKKSGRKK (93 aa)) shows a compositional bias: basic residues.

It belongs to the histone H1/H5 family.

The protein localises to the nucleus. The protein resides in the chromosome. Functionally, histones H1 are necessary for the condensation of nucleosome chains into higher-order structures. The histones H1.0 are found in cells that are in terminal stages of differentiation or that have low rates of cell division. This Xenopus laevis (African clawed frog) protein is Histone H1.0-B (h1-0-b).